Here is a 187-residue protein sequence, read N- to C-terminus: MVRPLNCIVAVSQNMGIGKNGDLPWPPLRNEFKYFQRMTTTSSVEGKQNLVIMGRKTWFSIPEKNRPLKDRINIVLSRELKEPPRGAHFLAKSLDDALRLIEQPELASKVDMVWIVGGSSVYQEAMNQPGHLRLFVTRIMQEFESDTFFPEIDLGKYKLLPEYPGVLSEVQEEKGIKYKFEVYEKKD.

A DHFR domain is found at 4–185 (PLNCIVAVSQ…IKYKFEVYEK (182 aa)). NADP(+) is bound by residues A10 and 16–22 (GIGKNGD). A substrate-binding site is contributed by 31–36 (EFKYFQ). K33 carries the post-translational modification N6-acetyllysine; alternate. K33 is modified (N6-succinyllysine; alternate). 55–57 (RKT) contributes to the NADP(+) binding site. Residues N65 and R71 each coordinate substrate. NADP(+) contacts are provided by residues 77 to 79 (SRE) and 117 to 124 (GGSSVYQE).

The protein belongs to the dihydrofolate reductase family. As to quaternary structure, homodimer.

The protein localises to the mitochondrion. It is found in the cytoplasm. The enzyme catalyses (6S)-5,6,7,8-tetrahydrofolate + NADP(+) = 7,8-dihydrofolate + NADPH + H(+). Its pathway is cofactor biosynthesis; tetrahydrofolate biosynthesis; 5,6,7,8-tetrahydrofolate from 7,8-dihydrofolate: step 1/1. Its function is as follows. Key enzyme in folate metabolism. Contributes to the de novo mitochondrial thymidylate biosynthesis pathway. Catalyzes an essential reaction for de novo glycine and purine synthesis, and for DNA precursor synthesis. Binds its own mRNA. This Mus musculus (Mouse) protein is Dihydrofolate reductase (Dhfr).